Here is a 1882-residue protein sequence, read N- to C-terminus: uncharacterized protein (1882 aa).

Residues 16-36 (FFLLFGIIFVLFSIIFLETSI) traverse the membrane as a helical segment. Disordered regions lie at residues 103–129 (DFGS…DVND), 220–306 (FPGD…ESET), 492–513 (VALA…VKDP), and 658–698 (QTDE…TKST). Residues 221-239 (PGDKGKGEDKKTTKKKSEI) are compositionally biased toward basic and acidic residues. The segment covering 240-249 (KQASSATTVL) has biased composition (polar residues). Basic and acidic residues-rich tracts occupy residues 259 to 275 (TDAK…KDSN), 284 to 294 (NKDKVWFKSDE), and 500 to 511 (DKQESSADDGVK). Residues 667 to 698 (AKTTQGTTDSLTQLADASSSSSSSSTGDTKST) are compositionally biased toward low complexity. 4 helical membrane-spanning segments follow: residues 987–1007 (ASVV…ILLI), 1037–1057 (VFAG…AFLL), 1080–1100 (WISF…ISWI), and 1154–1174 (LFTY…AGTI). 2 disordered regions span residues 1233–1253 (DQIQ…EHPY) and 1572–1598 (KDGQ…TSST). The segment covering 1234-1245 (QIQQQQQQQQQQ) has biased composition (low complexity). A compositionally biased stretch (gly residues) spans 1583–1594 (TSSGGGSCGGGS). 4 helical membrane passes run 1759–1779 (FLLG…GISM), 1807–1827 (FFIP…AGLL), 1828–1848 (VGVQ…VFEF), and 1851–1871 (YMVG…YFWI).

It belongs to the ABC-4 integral membrane protein family.

The protein localises to the cell membrane. This is an uncharacterized protein from Mycoplasma pneumoniae (strain ATCC 29342 / M129 / Subtype 1) (Mycoplasmoides pneumoniae).